The sequence spans 160 residues: Phosphopantetheine adenylyltransferase (160 aa).

Thr-9 lines the substrate pocket. ATP-binding positions include 9–10 and His-17; that span reads TF. Lys-41, Leu-73, and Arg-87 together coordinate substrate. ATP is bound by residues 88-90, Glu-98, and 123-129; these read GLR and YMFISAS.

The protein belongs to the bacterial CoaD family. As to quaternary structure, homohexamer. The cofactor is Mg(2+).

It is found in the cytoplasm. It catalyses the reaction (R)-4'-phosphopantetheine + ATP + H(+) = 3'-dephospho-CoA + diphosphate. Its pathway is cofactor biosynthesis; coenzyme A biosynthesis; CoA from (R)-pantothenate: step 4/5. Functionally, reversibly transfers an adenylyl group from ATP to 4'-phosphopantetheine, yielding dephospho-CoA (dPCoA) and pyrophosphate. The polypeptide is Phosphopantetheine adenylyltransferase (Thiobacillus denitrificans (strain ATCC 25259 / T1)).